An 83-amino-acid chain; its full sequence is Apolipoprotein C-I, basic form (83 aa).

A signal peptide spans Met1–Gly26.

Belongs to the apolipoprotein C1 family.

The protein localises to the secreted. Inhibitor of lipoprotein binding to the low density lipoprotein (LDL) receptor, LDL receptor-related protein, and very low density lipoprotein (VLDL) receptor. Associates with high density lipoproteins (HDL) and the triacylglycerol-rich lipoproteins in the plasma and makes up about 10% of the protein of the VLDL and 2% of that of HDL. Appears to interfere directly with fatty acid uptake and is also the major plasma inhibitor of cholesteryl ester transfer protein (CETP). Binds free fatty acids and reduces their intracellular esterification. Modulates the interaction of APOE with beta-migrating VLDL and inhibits binding of beta-VLDL to the LDL receptor-related protein. This chain is Apolipoprotein C-I, basic form (APOC1B), found in Cercocebus atys (Sooty mangabey).